We begin with the raw amino-acid sequence, 245 residues long: Dehydrogenase/reductase SDR family member 6 (245 aa).

NAD(+) contacts are provided by residues 16–18, aspartate 37, and aspartate 58; that span reads QGI. A substrate-binding site is contributed by arginine 144. The active-site Proton acceptor is the tyrosine 147. NAD(+) is bound by residues lysine 151 and 180 to 184; that span reads VDTPS. Residues arginine 188 and arginine 205 each contribute to the substrate site.

The protein belongs to the short-chain dehydrogenases/reductases (SDR) family. As to quaternary structure, homotetramer. Detected in liver, spleen and macrophages. Widely expressed.

It localises to the cytoplasm. The catalysed reaction is cis-4-hydroxy-L-proline + NAD(+) = 4-oxo-L-proline + NADH + H(+). The enzyme catalyses (R)-3-hydroxybutanoate + NAD(+) = acetoacetate + NADH + H(+). Its pathway is amino-acid metabolism. It functions in the pathway siderophore biosynthesis. NAD(H)-dependent dehydrogenase/reductase with a preference for cyclic substrates. Catalyzes stereoselective conversion of 4-oxo-L-proline to cis-4-hydroxy-L-proline, likely a detoxification mechanism for ketoprolines. Mediates the formation of 2,5-dihydroxybenzoate (2,5-DHBA), a siderophore that chelates free cytoplasmic iron and associates with LCN2, thereby regulating iron transport and homeostasis while protecting cells against free radical-induced oxidative stress. The iron-siderophore complex is imported into mitochondria, providing an iron source for mitochondrial metabolic processes in particular heme synthesis. May act as a 3-hydroxybutyrate dehydrogenase. Its function is as follows. (Microbial infection) May play a role in susceptibility to bacterial infection by providing an assimilable source of iron that is exploited by pathogenic bacteria. Host iron-siderophore complexes can be used by bacteria to promote their own growth and pathogenicity. The chain is Dehydrogenase/reductase SDR family member 6 from Mus musculus (Mouse).